The primary structure comprises 289 residues: Probable signal peptidase I (289 aa).

Over 1-53 (MTETTDSVPEPPSDADQLQPKVSICGLDMPAEVSETAAEAAIGVSEPKKRSAL) the chain is Cytoplasmic. The chain crosses the membrane as a helical span at residues 54–74 (WEFAILAVIAIGLYYVMLTFV). At 75 to 289 (ARPYLIPSES…VGSVNSQQGQ (215 aa)) the chain is on the extracellular side. Residues Ser-84 and Lys-162 contribute to the active site.

Belongs to the peptidase S26 family.

The protein resides in the cell membrane. The catalysed reaction is Cleavage of hydrophobic, N-terminal signal or leader sequences from secreted and periplasmic proteins.. This chain is Probable signal peptidase I (lepB), found in Mycobacterium leprae (strain TN).